Consider the following 353-residue polypeptide: D-alanine--D-alanine ligase (353 aa).

Residues 141 to 349 (KAAFAAAGLP…LPDLVAQLVH (209 aa)) form the ATP-grasp domain. An ATP-binding site is contributed by 176–231 (EAELGYPCFVKPANMGSSVGISKARHRDQLLAGLKEAARHDTRLVVEHGVSARELE). Mg(2+) is bound by residues D302, E316, and N318.

The protein belongs to the D-alanine--D-alanine ligase family. It depends on Mg(2+) as a cofactor. Mn(2+) serves as cofactor.

It localises to the cytoplasm. The catalysed reaction is 2 D-alanine + ATP = D-alanyl-D-alanine + ADP + phosphate + H(+). The protein operates within cell wall biogenesis; peptidoglycan biosynthesis. In terms of biological role, cell wall formation. The polypeptide is D-alanine--D-alanine ligase (Synechococcus sp. (strain CC9311)).